A 155-amino-acid polypeptide reads, in one-letter code: Fibroblast growth factor 1 (155 aa).

N-acetylalanine is present on alanine 2. Residues 2–15 (AEGEITTFAALTER) constitute a propeptide that is removed on maturation. Asparagine 33 contributes to the heparin binding site. The heparin-binding stretch occupies residues 127–143 (KKNGSCKRGPRTHYGQK).

Belongs to the heparin-binding growth factors family. In terms of assembly, monomer. Homodimer. Interacts with FGFR1, FGFR2, FGFR3 and FGFR4. Affinity between fibroblast growth factors (FGFs) and their receptors is increased by heparan sulfate glycosaminoglycans that function as coreceptors. Found in a complex with FGFBP1, FGF1 and FGF2. Interacts with FGFBP1. Part of a Cu(2+)-dependent multiprotein aggregate containing FGF1, S100A13 and SYT1. Interacts with SYT1. Interacts with S100A13. Interacts with LRRC59. Interacts with CSNKA, CSNKB and FIBP. While binding with LRRC59, CSNKA and FIBP seem mutually exclusive, CSNKB and FIBP may cooperatively interact with FGF1. Forms a ternary complex with FGFR1 and ITGAV:ITGB3 and induces the recruitment of PTPN11 to the complex. In the nucleus, phosphorylated by PKC/PRKCD.

Its subcellular location is the secreted. It is found in the cytoplasm. The protein localises to the cell cortex. It localises to the cytosol. The protein resides in the nucleus. Plays an important role in the regulation of cell survival, cell division, angiogenesis, cell differentiation and cell migration. Functions as a potent mitogen in vitro. Acts as a ligand for FGFR1 and integrins. Binds to FGFR1 in the presence of heparin leading to FGFR1 dimerization and activation via sequential autophosphorylation on tyrosine residues which act as docking sites for interacting proteins, leading to the activation of several signaling cascades. Binds to integrin ITGAV:ITGB3. Its binding to integrin, subsequent ternary complex formation with integrin and FGFR1, and the recruitment of PTPN11 to the complex are essential for FGF1 signaling. Induces the phosphorylation and activation of FGFR1, FRS2, MAPK3/ERK1, MAPK1/ERK2 and AKT1. Can induce angiogenesis. The sequence is that of Fibroblast growth factor 1 (Fgf1) from Mus musculus (Mouse).